A 348-amino-acid polypeptide reads, in one-letter code: Sorbitol dehydrogenase (348 aa).

Zn(2+) contacts are provided by cysteine 40, histidine 65, and glutamate 66. NAD(+) contacts are provided by residues isoleucine 179, aspartate 199, arginine 204, 269–271, and 293–295; these read VGI and SFR. Position 295 (arginine 295) interacts with substrate.

It belongs to the zinc-containing alcohol dehydrogenase family. As to quaternary structure, homotetramer. Zn(2+) serves as cofactor.

It carries out the reaction xylitol + NAD(+) = D-xylulose + NADH + H(+). The enzyme catalyses L-iditol + NAD(+) = keto-L-sorbose + NADH + H(+). The catalysed reaction is keto-D-fructose + NADH + H(+) = D-sorbitol + NAD(+). Its function is as follows. Polyol dehydrogenase that catalyzes the reversible NAD(+)-dependent oxidation of various sugar alcohols. Is active with xylitol, L-iditol and D-sorbitol (D-glucitol) as substrates, leading to the C2-oxidized products D-xylulose, L-sorbose and D-fructose, respectively. Is a key enzyme in the polyol pathway that interconverts glucose and fructose via sorbitol, which constitutes an important alternate route for glucose metabolism. The sequence is that of Sorbitol dehydrogenase (SDH) from Bombyx mori (Silk moth).